Reading from the N-terminus, the 407-residue chain is MSNVYDILKERGYIKQLTHEEEIRELLGKEKISFYIGFDPTADSLHVGHFLQMMVMAHMQKAGHRPIALVGGGTGMIGDPTGKTDMRKMMTKEQIEYNCNCFKKQLAKIIDFSEDKAIMVNNADWLLNLNYIEFLREIGVHFSVNKMLTAECFKSRLEKGLSFLEFNYMLMQGYDFLELNRKYNCVMELGGDDQWSNILAGVDLIRRKESKSAYGMTFTLLTNSEGKKMGKTESGALWLDPEKTSPYEFYQYWRNVADADVEKCLRLITFLPMDEVRRLSSLEGAEINEAKRVLAFEVTKLIHGEEEAQKAKVAAEALFGGNVKDLGNMPTAYIDKDDLNNSLVDLLAKCEILPSKSEARRLIKQGGLYVNDEKVTDINLVLTEEHVTEDGIMIRRGKKNFNRIVVE.

Tyr35 contributes to the L-tyrosine binding site. Residues 40 to 49 (PTADSLHVGH) carry the 'HIGH' region motif. L-tyrosine-binding residues include Tyr168 and Gln172. A 'KMSKS' region motif is present at residues 228–232 (KMGKT). Position 231 (Lys231) interacts with ATP. The region spanning 341 to 405 (NSLVDLLAKC…RGKKNFNRIV (65 aa)) is the S4 RNA-binding domain.

The protein belongs to the class-I aminoacyl-tRNA synthetase family. TyrS type 1 subfamily. As to quaternary structure, homodimer.

It is found in the cytoplasm. It catalyses the reaction tRNA(Tyr) + L-tyrosine + ATP = L-tyrosyl-tRNA(Tyr) + AMP + diphosphate + H(+). In terms of biological role, catalyzes the attachment of tyrosine to tRNA(Tyr) in a two-step reaction: tyrosine is first activated by ATP to form Tyr-AMP and then transferred to the acceptor end of tRNA(Tyr). The protein is Tyrosine--tRNA ligase of Clostridium botulinum (strain Loch Maree / Type A3).